We begin with the raw amino-acid sequence, 102 residues long: Large ribosomal subunit protein eL21 (102 aa).

Residues 1–21 (MVRRSKGFRSRTRKKLRKKPR) are compositionally biased toward basic residues. Residues 1-33 (MVRRSKGFRSRTRKKLRKKPRERGLSPLGPMTQ) form a disordered region.

It belongs to the eukaryotic ribosomal protein eL21 family.

This Methanopyrus kandleri (strain AV19 / DSM 6324 / JCM 9639 / NBRC 100938) protein is Large ribosomal subunit protein eL21.